The chain runs to 66 residues: Large ribosomal subunit protein uL29 (66 aa).

Belongs to the universal ribosomal protein uL29 family.

This chain is Large ribosomal subunit protein uL29, found in Borrelia garinii subsp. bavariensis (strain ATCC BAA-2496 / DSM 23469 / PBi) (Borreliella bavariensis).